Consider the following 250-residue polypeptide: UDP-2,3-diacylglucosamine hydrolase (250 aa).

Mn(2+)-binding residues include D8, H10, D41, N79, and H115. 79–80 (NH) contributes to the substrate binding site. D123, T165, K168, and H196 together coordinate substrate. The Mn(2+) site is built by H196 and H198.

Belongs to the LpxH family. Mn(2+) is required as a cofactor.

It localises to the cell inner membrane. The catalysed reaction is UDP-2-N,3-O-bis[(3R)-3-hydroxytetradecanoyl]-alpha-D-glucosamine + H2O = 2-N,3-O-bis[(3R)-3-hydroxytetradecanoyl]-alpha-D-glucosaminyl 1-phosphate + UMP + 2 H(+). It participates in glycolipid biosynthesis; lipid IV(A) biosynthesis; lipid IV(A) from (3R)-3-hydroxytetradecanoyl-[acyl-carrier-protein] and UDP-N-acetyl-alpha-D-glucosamine: step 4/6. Hydrolyzes the pyrophosphate bond of UDP-2,3-diacylglucosamine to yield 2,3-diacylglucosamine 1-phosphate (lipid X) and UMP by catalyzing the attack of water at the alpha-P atom. Involved in the biosynthesis of lipid A, a phosphorylated glycolipid that anchors the lipopolysaccharide to the outer membrane of the cell. This chain is UDP-2,3-diacylglucosamine hydrolase, found in Blochmanniella pennsylvanica (strain BPEN).